A 309-amino-acid chain; its full sequence is HPr kinase/phosphorylase (309 aa).

Catalysis depends on residues histidine 144 and lysine 165. An ATP-binding site is contributed by 159-166 (GDSGLGKS). Serine 166 is a Mg(2+) binding site. Aspartate 183 (proton acceptor; for phosphorylation activity. Proton donor; for dephosphorylation activity) is an active-site residue. The segment at 206-215 (IEVRGLGLID) is important for the catalytic mechanism of both phosphorylation and dephosphorylation. Glutamate 207 provides a ligand contact to Mg(2+). The active site involves arginine 249. Residues 270 to 275 (PIRQGR) are important for the catalytic mechanism of dephosphorylation.

Belongs to the HPrK/P family. Homohexamer. Mg(2+) serves as cofactor.

The catalysed reaction is [HPr protein]-L-serine + ATP = [HPr protein]-O-phospho-L-serine + ADP + H(+). It carries out the reaction [HPr protein]-O-phospho-L-serine + phosphate + H(+) = [HPr protein]-L-serine + diphosphate. Catalyzes the ATP- as well as the pyrophosphate-dependent phosphorylation of a specific serine residue in HPr, a phosphocarrier protein of the phosphoenolpyruvate-dependent sugar phosphotransferase system (PTS). HprK/P also catalyzes the pyrophosphate-producing, inorganic phosphate-dependent dephosphorylation (phosphorolysis) of seryl-phosphorylated HPr (P-Ser-HPr). This Mycoplasmopsis pulmonis (strain UAB CTIP) (Mycoplasma pulmonis) protein is HPr kinase/phosphorylase (hprK).